The sequence spans 358 residues: Protein-glutamate methylesterase/protein-glutamine glutaminase (358 aa).

Residues 5 to 122 (SVLIIDDSAL…RNSLEAYTDE (118 aa)) form the Response regulatory domain. A 4-aspartylphosphate modification is found at Asp-56. In terms of domain architecture, CheB-type methylesterase spans 159–351 (GISTEKLIII…RRILARLVGA (193 aa)). Residues Ser-171, His-197, and Asp-293 contribute to the active site.

It belongs to the CheB family. Phosphorylated by CheA. Phosphorylation of the N-terminal regulatory domain activates the methylesterase activity.

The protein localises to the cytoplasm. The catalysed reaction is [protein]-L-glutamate 5-O-methyl ester + H2O = L-glutamyl-[protein] + methanol + H(+). It catalyses the reaction L-glutaminyl-[protein] + H2O = L-glutamyl-[protein] + NH4(+). In terms of biological role, involved in chemotaxis. Part of a chemotaxis signal transduction system that modulates chemotaxis in response to various stimuli. Catalyzes the demethylation of specific methylglutamate residues introduced into the chemoreceptors (methyl-accepting chemotaxis proteins or MCP) by CheR. Also mediates the irreversible deamidation of specific glutamine residues to glutamic acid. The polypeptide is Protein-glutamate methylesterase/protein-glutamine glutaminase (Nitrosomonas europaea (strain ATCC 19718 / CIP 103999 / KCTC 2705 / NBRC 14298)).